Reading from the N-terminus, the 920-residue chain is Phosphoenolpyruvate carboxylase (920 aa).

Residues His-138 and Lys-583 contribute to the active site.

Belongs to the PEPCase type 1 family. Mg(2+) is required as a cofactor.

The catalysed reaction is oxaloacetate + phosphate = phosphoenolpyruvate + hydrogencarbonate. Its function is as follows. Forms oxaloacetate, a four-carbon dicarboxylic acid source for the tricarboxylic acid cycle. The chain is Phosphoenolpyruvate carboxylase from Streptococcus pyogenes serotype M3 (strain ATCC BAA-595 / MGAS315).